We begin with the raw amino-acid sequence, 194 residues long: Cysteine and glycine-rich protein 3 (194 aa).

The interaction with TCAP stretch occupies residues 1-5 (MPNWG). Residues 10-61 (CGACDKTVYHAEEIQCNGRSFHKTCFHCMACRKALDSTTVAAHESEIYCKVC) enclose the LIM zinc-binding 1 domain. The Nuclear localization signal signature appears at 64–69 (RKYGPK). An interaction with CLF2 region spans residues 94–105 (QSPKPARAATTS). 3 positions are modified to phosphoserine: S95, S111, and S153. Residues 120–171 (CPRCGKSVYAAEKVMGGGKPWHKTCFPCAICGKSLESTNVTDKDGELYCKVC) enclose the LIM zinc-binding 2 domain.

In terms of assembly, self-associates. Oligomeric in the cytoplasm and monomeric in the nucleus. Homooligomers preferentially form along the actin cytoskeleton. Interacts with TCAP, ACTN2 and NRAP. Interacts with LDHD, SPTB, MYOD1, MYOG, MYF6. Interacts with GLRX3 (via C-terminus); GLRX3 and calcineurin compete for interaction with CSRP3. Interacts with CFL2; the stoichiometry influences F-actin depolymerization and possibly two molecules of CFL2 can interact with one molecule of CSRP3 resulting in the highest functional impact; the interaction is stronger with phosphorylated CFL2. Phosphorylated by PKC/PRKCA. In terms of tissue distribution, high in striated muscle and adult heart.

The protein localises to the nucleus. Its subcellular location is the cytoplasm. It is found in the cytoskeleton. The protein resides in the myofibril. It localises to the sarcomere. The protein localises to the z line. In terms of biological role, positive regulator of myogenesis. Acts as a cofactor for myogenic bHLH transcription factors such as MYOD1, and probably MYOG and MYF6. Enhances the DNA-binding activity of the MYOD1:TCF3 isoform E47 complex and may promote formation of a functional MYOD1:TCF3 isoform E47:MEF2A complex involved in myogenesis. Plays a crucial and specific role in the organization of cytosolic structures in cardiomyocytes. Could play a role in mechanical stretch sensing. May be a scaffold protein that promotes the assembly of interacting proteins at Z-line structures. It is essential for calcineurin anchorage to the Z line. Required for stress-induced calcineurin-NFAT activation. The role in regulation of cytoskeleton dynamics by association with CFL2 is reported conflictingly. Proposed to contribute to the maintenance of muscle cell integrity through an actin-based mechanism. Can directly bind to actin filaments, cross-link actin filaments into bundles without polarity selectivity and protect them from dilution- and cofilin-mediated depolymerization; the function seems to involve its self-association. In vitro can inhibit PKC/PRKCA activity. Proposed to be involved in cardiac stress signaling by down-regulating excessive PKC/PRKCA signaling. This Rattus norvegicus (Rat) protein is Cysteine and glycine-rich protein 3 (Csrp3).